We begin with the raw amino-acid sequence, 38 residues long: Photosystem II reaction center protein L (38 aa).

Residues 17–37 (SLYWGLLLIFVLAVSFSNYFF) form a helical membrane-spanning segment.

The protein belongs to the PsbL family. In terms of assembly, PSII is composed of 1 copy each of membrane proteins PsbA, PsbB, PsbC, PsbD, PsbE, PsbF, PsbH, PsbI, PsbJ, PsbK, PsbL, PsbM, PsbT, PsbX, PsbY, PsbZ, Psb30/Ycf12, at least 3 peripheral proteins of the oxygen-evolving complex and a large number of cofactors. It forms dimeric complexes.

It localises to the plastid. The protein resides in the chloroplast thylakoid membrane. In terms of biological role, one of the components of the core complex of photosystem II (PSII). PSII is a light-driven water:plastoquinone oxidoreductase that uses light energy to abstract electrons from H(2)O, generating O(2) and a proton gradient subsequently used for ATP formation. It consists of a core antenna complex that captures photons, and an electron transfer chain that converts photonic excitation into a charge separation. This subunit is found at the monomer-monomer interface and is required for correct PSII assembly and/or dimerization. In Amborella trichopoda, this protein is Photosystem II reaction center protein L.